The following is a 677-amino-acid chain: MTQVAKKILVTCALPYANGSIHLGHMLEHIQADVWVRYQRMRGHEVNFICADDAHGTPIMLKAQQLGITPEQMIGEMSQEHQTDFAGFNISYDNYHSTHSDENRELSELIYTRLKENGFIKNRTISQLYDPEKGMFLPDRFVKGTCPKCKSADQYGDNCEVCGATYSPTELIEPKSVVSGATPVMRDSEHFFFDLPSFSEMLQAWTRSGALQEQVANKMQEWFESGLQQWDISRDAPYFGFEIPNAPGKYFYVWLDAPIGYMGSFKNLCDKRGDTTSFDEYWKKDSDAELYHFIGKDIVYFHSLFWPAMLEGSHFRKPTNLFVHGYVTVNGAKMSKSRGTFIKASTWLKHFDADSLRYYYTAKLSSRIDDIDLNLEDFVQRVNADIVNKVVNLASRNAGFINKRFDGVLAAELADPQLYKTFTDAAAVIGEAWESREFGKAIREIMALADIANRYVDEQAPWVVAKQEGRDADLQAICSMGINLFRVLMTYLKPVLPTLSERVEAFLNSELNWDAIEQPLLGHKVNTFKALYNRIDMKQVEALVEASKEEVKAAAAPVTGPLADFPIQETITFDDFAKIDLRVALIENAEFVDGSDKLLRLTLDLGGEKRNVFSGIRSAYPDPQALIGRQTVMVANLAPRKMRFGVSEGMVMAAGPGGKDIFLLSPDDGAKPGQQVK.

A 'HIGH' region motif is present at residues 15-25; the sequence is PYANGSIHLGH. C146, C149, C159, and C162 together coordinate Zn(2+). A 'KMSKS' region motif is present at residues 333–337; the sequence is KMSKS. An ATP-binding site is contributed by K336. Positions 575 to 677 constitute a tRNA-binding domain; it reads DFAKIDLRVA…DGAKPGQQVK (103 aa).

The protein belongs to the class-I aminoacyl-tRNA synthetase family. MetG type 1 subfamily. In terms of assembly, homodimer. Requires Zn(2+) as cofactor.

The protein localises to the cytoplasm. It carries out the reaction tRNA(Met) + L-methionine + ATP = L-methionyl-tRNA(Met) + AMP + diphosphate. Is required not only for elongation of protein synthesis but also for the initiation of all mRNA translation through initiator tRNA(fMet) aminoacylation. This Salmonella agona (strain SL483) protein is Methionine--tRNA ligase.